The primary structure comprises 168 residues: Vasopressin-neurophysin 2-copeptin (168 aa).

Positions M1–A23 are cleaved as a signal peptide. Residues C24 and C29 are joined by a disulfide bond. Glycine amide is present on G32. 7 disulfides stabilise this stretch: C45/C89, C48/C62, C56/C79, C63/C69, C96/C108, C102/C120, and C109/C114. N135 carries N-linked (GlcNAc...) asparagine glycosylation.

Belongs to the vasopressin/oxytocin family. As to quaternary structure, interacts with vasopressin receptors V1bR/AVPR1B (Ki=85 pM), V1aR/AVPR1A (Ki=0.6 nM) and V2R/AVPR2 (Ki=4.9 nM). Interacts with oxytocin receptor (OXTR) (Ki=110 nM).

Its subcellular location is the secreted. In terms of biological role, neurophysin 2 specifically binds vasopressin. Functionally, vasopressin has a direct antidiuretic action on the kidney, it also causes vasoconstriction of the peripheral vessels. Acts by binding to vasopressin receptors (V1bR/AVPR1B, V1aR/AVPR1A, and V2R/AVPR2). This Mus musculus (Mouse) protein is Vasopressin-neurophysin 2-copeptin (Avp).